We begin with the raw amino-acid sequence, 291 residues long: 4-hydroxy-tetrahydrodipicolinate synthase (291 aa).

Residue threonine 44 coordinates pyruvate. Tyrosine 132 functions as the Proton donor/acceptor in the catalytic mechanism. The active-site Schiff-base intermediate with substrate is the lysine 160. Isoleucine 202 contributes to the pyruvate binding site.

Belongs to the DapA family. Homotetramer; dimer of dimers.

The protein localises to the cytoplasm. The enzyme catalyses L-aspartate 4-semialdehyde + pyruvate = (2S,4S)-4-hydroxy-2,3,4,5-tetrahydrodipicolinate + H2O + H(+). Its pathway is amino-acid biosynthesis; L-lysine biosynthesis via DAP pathway; (S)-tetrahydrodipicolinate from L-aspartate: step 3/4. Its function is as follows. Catalyzes the condensation of (S)-aspartate-beta-semialdehyde [(S)-ASA] and pyruvate to 4-hydroxy-tetrahydrodipicolinate (HTPA). The protein is 4-hydroxy-tetrahydrodipicolinate synthase of Roseobacter denitrificans (strain ATCC 33942 / OCh 114) (Erythrobacter sp. (strain OCh 114)).